The chain runs to 176 residues: Ribosome rescue factor SmrB (176 aa).

In terms of domain architecture, Smr spans 93 to 168 (LDLHGYRQSE…GDAALLVLID (76 aa)).

Belongs to the SmrB family. In terms of assembly, associates with collided ribosomes, but not with correctly translating polysomes.

In terms of biological role, acts as a ribosome collision sensor. Detects stalled/collided disomes (pairs of ribosomes where the leading ribosome is stalled and a second ribosome has collided with it) and endonucleolytically cleaves mRNA at the 5' boundary of the stalled ribosome. Stalled/collided disomes form a new interface (primarily via the 30S subunits) that binds SmrB. Cleaved mRNA becomes available for tmRNA ligation, leading to ribosomal subunit dissociation and rescue of stalled ribosomes. The sequence is that of Ribosome rescue factor SmrB from Shewanella baltica (strain OS223).